Consider the following 67-residue polypeptide: Kappa-scoloptoxin(04)-Ssd1b (67 aa).

A signal peptide spans 1 to 24; it reads MKKTCVVSVFLVLLLLKFHDLSMG. Residues 25 to 36 constitute a propeptide that is removed on maturation; sequence EEISPLKKVARR. Cystine bridges form between C44–C55 and C49–C62.

As to expression, expressed by the venom gland.

The protein resides in the secreted. This is Kappa-scoloptoxin(04)-Ssd1b from Scolopendra dehaani (Thai centipede).